The chain runs to 96 residues: Protein RnfH (96 aa).

It belongs to the UPF0125 (RnfH) family.

The polypeptide is Protein RnfH (Shigella flexneri).